We begin with the raw amino-acid sequence, 83 residues long: RNA-binding protein Hfq (83 aa).

The 60-residue stretch at 10 to 69 folds into the Sm domain; it reads DPFLNALRREHVPVSIYLVNGIKLQGQIESFDQYVVLLRNTVTQMVYKHAISTIVPGRAV.

Belongs to the Hfq family. Homohexamer.

Its function is as follows. RNA chaperone that binds small regulatory RNA (sRNAs) and mRNAs to facilitate mRNA translational regulation in response to envelope stress, environmental stress and changes in metabolite concentrations. Also binds with high specificity to tRNAs. This Delftia acidovorans (strain DSM 14801 / SPH-1) protein is RNA-binding protein Hfq.